The sequence spans 564 residues: Histone acetyltransferase rtt109 (564 aa).

Residues Phe-138, 157-159 (HVL), and Trp-167 contribute to the acetyl-CoA site. Residue Asp-261 is the Proton donor/acceptor of the active site. Position 263 is an N6-acetyllysine; by autocatalysis (Lys-263). Disordered stretches follow at residues 355 to 420 (YDKV…NAFY) and 506 to 549 (RKKD…ESPG). The segment covering 366-377 (AVSVSTDSQSSD) has biased composition (low complexity). Polar residues-rich tracts occupy residues 394–417 (DPST…TDQN) and 512–521 (SQATTATSAQ). Residues 529-544 (GTVSTAVTAEASTTGT) show a composition bias toward low complexity.

It belongs to the RTT109 family.

The protein resides in the nucleus. The protein localises to the vacuole. It catalyses the reaction L-lysyl-[protein] + acetyl-CoA = N(6)-acetyl-L-lysyl-[protein] + CoA + H(+). The catalysed reaction is L-lysyl-[histone] + acetyl-CoA = N(6)-acetyl-L-lysyl-[histone] + CoA + H(+). Histone chaperone-dependent acetylase that modifies 'Lys-56' of histone H3 (H3K56ac). Histone H3 'Lys-56' acetylation may be required for S-phase-linked DNA damage tolerance. Also acetylates 'Lys-9' of histone H3 (H3K9ac). Autoacetylates. The polypeptide is Histone acetyltransferase rtt109 (Aspergillus flavus).